The chain runs to 890 residues: Alanine--tRNA ligase (890 aa).

Residues His567, His571, Cys680, and His684 each contribute to the Zn(2+) site.

The protein belongs to the class-II aminoacyl-tRNA synthetase family. The cofactor is Zn(2+).

The protein localises to the cytoplasm. The enzyme catalyses tRNA(Ala) + L-alanine + ATP = L-alanyl-tRNA(Ala) + AMP + diphosphate. Its function is as follows. Catalyzes the attachment of alanine to tRNA(Ala) in a two-step reaction: alanine is first activated by ATP to form Ala-AMP and then transferred to the acceptor end of tRNA(Ala). Also edits incorrectly charged Ser-tRNA(Ala) and Gly-tRNA(Ala) via its editing domain. The protein is Alanine--tRNA ligase of Ruegeria pomeroyi (strain ATCC 700808 / DSM 15171 / DSS-3) (Silicibacter pomeroyi).